A 448-amino-acid polypeptide reads, in one-letter code: MVMSRIRDTIARPFQNLTALEKVVQWLRLGTTLLIISFGLALTVGPLSSPRTLYMSRLDTYSADITTGLFTVLRESMEQSTSTEENNGVGLTTSELYILTAYTESQIKNVPQYITVSLYGRCDSTYTMVEVFDSEGNMHSVKNSTTKSTCSSIGTDYLFDYREVLESLGLDIILDYAYNKIGSQQAESSAYTTYMRSLKHKKANVLHLLYAVISFQVCMLFFMIWYYYIKGRFMNALKERALVHINSLLSLVVFIGGLISSISLAWVNYTIQSRINTELEAFGFSYHLGVTWFALLWCFAGLISVSCLAWSGLEWCISDNGTSYGGGIDDKFLGYQAGVFTDADLDDETSYSQRYPQRQSTSGEAELMRNSDTMATIRKTSDVDLNSENDANTSLDHGNPTANISNGGKHEPFATREEFELQDIRFRSSNDSEESMQRVIKPSSALQF.

At 1–28 (MVMSRIRDTIARPFQNLTALEKVVQWLR) the chain is on the cytoplasmic side. A helical transmembrane segment spans residues 29–49 (LGTTLLIISFGLALTVGPLSS). At 50-204 (PRTLYMSRLD…MRSLKHKKAN (155 aa)) the chain is on the extracellular side. A helical transmembrane segment spans residues 205 to 225 (VLHLLYAVISFQVCMLFFMIW). Residues 226–246 (YYYIKGRFMNALKERALVHIN) lie on the Cytoplasmic side of the membrane. The chain crosses the membrane as a helical span at residues 247-267 (SLLSLVVFIGGLISSISLAWV). Topologically, residues 268-287 (NYTIQSRINTELEAFGFSYH) are extracellular. The chain crosses the membrane as a helical span at residues 288 to 308 (LGVTWFALLWCFAGLISVSCL). At 309 to 448 (AWSGLEWCIS…VIKPSSALQF (140 aa)) the chain is on the cytoplasmic side. Polar residues-rich tracts occupy residues 351 to 363 (YSQR…STSG) and 383 to 406 (VDLN…NISN). 2 disordered regions span residues 351-411 (YSQR…GKHE) and 427-448 (RSSN…ALQF).

It localises to the membrane. Its function is as follows. May be involved in cell wall organization and biogenesis. The protein is Protein ECM7 (ECM7) of Saccharomyces cerevisiae (strain ATCC 204508 / S288c) (Baker's yeast).